The sequence spans 320 residues: Nodulation efficiency protein NfeD (320 aa).

The protein belongs to the ornithine cyclodeaminase/mu-crystallin family.

Seems to be involved in the nodulation efficiency of R.meliloti GR4 on alfalfa roots. This Rhizobium meliloti (Ensifer meliloti) protein is Nodulation efficiency protein NfeD.